The following is a 570-amino-acid chain: Urease subunit alpha (570 aa).

In terms of domain architecture, Urease spans 135–570 (GGLDIHVHFN…ELPLAQRYHL (436 aa)). Residues H140, H142, and K219 each contribute to the Ni(2+) site. K219 is modified (N6-carboxylysine). Substrate is bound at residue H221. 2 residues coordinate Ni(2+): H248 and H274. H322 serves as the catalytic Proton donor. Residue D362 participates in Ni(2+) binding.

The protein belongs to the metallo-dependent hydrolases superfamily. Urease alpha subunit family. As to quaternary structure, heterotrimer of UreA (gamma), UreB (beta) and UreC (alpha) subunits. Three heterotrimers associate to form the active enzyme. Ni cation is required as a cofactor. Post-translationally, carboxylation allows a single lysine to coordinate two nickel ions.

It is found in the cytoplasm. It catalyses the reaction urea + 2 H2O + H(+) = hydrogencarbonate + 2 NH4(+). It participates in nitrogen metabolism; urea degradation; CO(2) and NH(3) from urea (urease route): step 1/1. The sequence is that of Urease subunit alpha from Natronomonas pharaonis (strain ATCC 35678 / DSM 2160 / CIP 103997 / JCM 8858 / NBRC 14720 / NCIMB 2260 / Gabara) (Halobacterium pharaonis).